The primary structure comprises 207 residues: Small ribosomal subunit protein uS7y (207 aa).

At A2 the chain carries N-acetylalanine.

Belongs to the universal ribosomal protein uS7 family. Expressed in root tips, lateral root primordia, leaf primordia, shoot apical meristem and vasculature of cotyledons.

This chain is Small ribosomal subunit protein uS7y, found in Arabidopsis thaliana (Mouse-ear cress).